An 840-amino-acid polypeptide reads, in one-letter code: Phosphatidylglycerol lysyltransferase (840 aa).

At 1–8 (MNQEVKNK) the chain is on the cytoplasmic side. The helical transmembrane segment at 9 to 29 (IFSILKITFATALFIFVVITL) threads the bilayer. Residues 30–52 (YRELSGINFKDTLVEFSKINRMS) lie on the Extracellular side of the membrane. A helical membrane pass occupies residues 53–73 (LVLLFIGGGASLVILSMYDVI). At 74–89 (LSRALKMDISLGKVLR) the chain is on the cytoplasmic side. A helical membrane pass occupies residues 90 to 110 (VSYIINALNAIVGFGGFIGAG). At 111 to 128 (VRAMVYKNYTHDKKKLVH) the chain is on the extracellular side. A helical transmembrane segment spans residues 129–149 (FISLILISMLTGLSLLSLLIV). Residues 150–161 (FHVFDASLILNK) are Cytoplasmic-facing. The helical transmembrane segment at 162–182 (ITWVRWVLYAVSLFLPLFIIY) threads the bilayer. The Extracellular portion of the chain corresponds to 183–200 (SMVRPPDKNNRYVGLYCT). Residues 201-221 (LVSCVEWLAAAVVLYFCGVIV) traverse the membrane as a helical segment. Residues 222–229 (DVHVSFMS) lie on the Cytoplasmic side of the membrane. The chain crosses the membrane as a helical span at residues 230–250 (FIAIFIIAALSGLVSFIPGGF). At 251 to 271 (GAFDLVVLLGFKTLGVPEEKV) the chain is on the extracellular side. The helical transmembrane segment at 272-292 (LLMLLLYRFAYYFVPVIIALI) threads the bilayer. At 293–337 (LSSFEFGTSAKKYIEGSKYFIPAKDVTSFLMSYQKDIIAKIPSLS) the chain is on the cytoplasmic side. A helical membrane pass occupies residues 338–358 (LAILVFFTSMIFFVNNLTIVY). Residues 359–369 (DALYDGNHLTY) are Extracellular-facing. The helical transmembrane segment at 370–390 (YLLLAIHTSACLLLLLNVVGI) threads the bilayer. The Cytoplasmic portion of the chain corresponds to 391 to 394 (YKQS). 2 helical membrane-spanning segments follow: residues 395-415 (RRAIIYAMISIILIIVATLFT) and 416-436 (YASYILITWLVIIFALLIVAF). Residues 437–450 (RRARRLKRPIRMRN) are Cytoplasmic-facing. A helical membrane pass occupies residues 451–471 (LVAMLLFSIFILYINHIFIAG). Over 472–489 (TFYALDVYTIEMHTSVLK) the chain is Extracellular. A helical transmembrane segment spans residues 490–510 (YYFWITILIIAIIVGAIAWLF). Topologically, residues 511–840 (DYQFSKVRIS…SKVMRVIRHK (330 aa)) are cytoplasmic.

The protein belongs to the LPG synthase family.

The protein resides in the cell membrane. It carries out the reaction L-lysyl-tRNA(Lys) + a 1,2-diacyl-sn-glycero-3-phospho-(1'-sn-glycerol) = a 1,2-diacyl-sn-glycero-3-phospho-1'-(3'-O-L-lysyl)-sn-glycerol + tRNA(Lys). Catalyzes the transfer of a lysyl group from L-lysyl-tRNA(Lys) to membrane-bound phosphatidylglycerol (PG), which produces lysylphosphatidylglycerol (LPG), a major component of the bacterial membrane with a positive net charge. LPG synthesis contributes to bacterial virulence as it is involved in the resistance mechanism against cationic antimicrobial peptides (CAMP) produces by the host's immune system (defensins, cathelicidins) and by the competing microorganisms (bacteriocins). In fact, the modification of anionic phosphatidylglycerol with positively charged L-lysine results in repulsion of the peptides. This is Phosphatidylglycerol lysyltransferase (mprF) from Staphylococcus aureus (strain MRSA252).